A 585-amino-acid polypeptide reads, in one-letter code: MSHDNKPTDSNPAASNFLRSIIDQDLAAGTYAGRQDKQGEPLPTVITRFPPEPNGYLHIGHAKSICLNFGLARDYGGRCHLRFDDTNPVKEDTEYVESIIDAVHWLGFSWDSEGKDGQKQPHLYYASDYFDQLYAFAETLIERGAAYVDSQSAEQIAASRGNFSEPGKPSPFRDRSVEENLQLFRDMRAGKYADGEHVLRAKIDMAAPNIVMRDPVLYRIRHAHHHRTGDKWCIYPMYDFTHCISDALENITHSLCTLEFENNRPLYDWVLEHLRDSGVFRDPLPHQYEFARLNLTYAITSKRKLKQLVDEQRVDGWDDPRMPTLVGVRRRGYTPESIQLFCDRVGVAKADSWIDMSTLEGSVRDDLDGRAARGVAVLDPLKLIIDNYPEGQSEECSAPVHPKKPELGKRVFPLSRELWIEREDFNETPPKGYFRLFPGNKVRLKYGYVIECTGVDKDADGNVIAVHASYLPDTKSGTPGADSVKVKGVIHWVSAAHAYEAEVRLYDRLFNDPNPDAGGKNFLDALNPDSKQVITAYLEPGLREAQPEDRFQFERHGYFVADRSDSTPGKPVFNRIVGLKDSWGK.

The 'HIGH' region motif lies at 51 to 61 (PEPNGYLHIGH). ATP-binding positions include 52–54 (EPN) and 58–64 (HIGHAKS). The L-glutamine site is built by D84 and Y238. ATP contacts are provided by residues T257 and 292 to 293 (RL). A 'KMSKS' region motif is present at residues 299 to 303 (ITSKR).

Belongs to the class-I aminoacyl-tRNA synthetase family. As to quaternary structure, monomer.

It is found in the cytoplasm. The enzyme catalyses tRNA(Gln) + L-glutamine + ATP = L-glutaminyl-tRNA(Gln) + AMP + diphosphate. The polypeptide is Glutamine--tRNA ligase (Cupriavidus taiwanensis (strain DSM 17343 / BCRC 17206 / CCUG 44338 / CIP 107171 / LMG 19424 / R1) (Ralstonia taiwanensis (strain LMG 19424))).